Here is a 505-residue protein sequence, read N- to C-terminus: Maturase K (505 aa).

Belongs to the intron maturase 2 family. MatK subfamily.

The protein resides in the plastid. Its subcellular location is the chloroplast. Its function is as follows. Usually encoded in the trnK tRNA gene intron. Probably assists in splicing its own and other chloroplast group II introns. The polypeptide is Maturase K (Rhizophora stylosa (Bakau)).